A 132-amino-acid chain; its full sequence is Protein p15 (132 aa).

May play a role in infectivity. This Panicum mosaic virus (strain United States/Kansas 109S) (PMV) protein is Protein p15.